Here is an 828-residue protein sequence, read N- to C-terminus: MQDHLVNETKNIVEVGIDSSIEESYLAYSMSVIIGRALPDARDGLKPVHRRILYAMHELGLTSKVAYKKSARIVGDVIGKYHPHGDTAVYDALVRMAQDFSMRLELVDGQGNFGSIDGDNAAAMRYTEARMTKASEEILRDIDKDTIDFVPNYDDTLKEPDILPSRLPNLLVNGANGIAVGMATSIPPHRIDEIIDALAHVLGNPNAELDKILEFVKGPDFPTGGIIYGKAGIVEAYKTGRGRVKVRAKVHVEKTKNKEIIVLGEMPFQTNKAKLVEQISDLAREKQIEGISEVRDESDREGIRVVIELKRDAMSEIVLNHLYKLTTMETTFSIILLAIYNKEPKIFTLLELLRLFLNHRKTIIIRRTIFELEKAKARAHILEGYLIALDNIDEIVRLIKTSPSPEAAKNALIERFSLSEIQSKAILEMRLQRLTGLERDKIKEEYQNLLELIDDLNGILKSEDRLNEVVKTELLEVKEQFSSPRRTEIQESYESIDTEDLIANEPMVVSMSYKGYVKRVDLKAYERQNRGGKGKLSGSTYEDDFIENFFVANTHDILLFITNKGQLYHLKVYKIPEASRIAMGKAIVNLISLAPNEKIMATLSTKDFSDERSLAFFTKNGVVKRTNLSEFGGNRSYSGIRAIVLDEGDELVGAKVVDKNAKHLLIASYLGMFIKFPLEDVREIGRTTRGVMGIRLNENDFVVGAVVISDDSNKLLSVSENGLGKQTLAEAYREQSRGGKGVIGMKLTQKTGNLVSVISVDDENLNLMILTASAKMIRVSIKDIRETGRNASGVKLINTADKVVYVNSCPKEEEPENLETSSVQNLFE.

The Topo IIA-type catalytic domain maps to 38–501 (LPDARDGLKP…SYESIDTEDL (464 aa)). The active-site O-(5'-phospho-DNA)-tyrosine intermediate is tyrosine 126. The GyrA-box motif lies at 528-534 (QNRGGKG).

The protein belongs to the type II topoisomerase GyrA/ParC subunit family. As to quaternary structure, heterotetramer, composed of two GyrA and two GyrB chains. In the heterotetramer, GyrA contains the active site tyrosine that forms a transient covalent intermediate with DNA, while GyrB binds cofactors and catalyzes ATP hydrolysis.

The protein resides in the cytoplasm. The catalysed reaction is ATP-dependent breakage, passage and rejoining of double-stranded DNA.. Functionally, a type II topoisomerase that negatively supercoils closed circular double-stranded (ds) DNA in an ATP-dependent manner to modulate DNA topology and maintain chromosomes in an underwound state. Negative supercoiling favors strand separation, and DNA replication, transcription, recombination and repair, all of which involve strand separation. Also able to catalyze the interconversion of other topological isomers of dsDNA rings, including catenanes and knotted rings. Type II topoisomerases break and join 2 DNA strands simultaneously in an ATP-dependent manner. The polypeptide is DNA gyrase subunit A (Helicobacter pylori (strain J99 / ATCC 700824) (Campylobacter pylori J99)).